The sequence spans 313 residues: 4-diphosphocytidyl-2-C-methyl-D-erythritol kinase (313 aa).

Lys-11 is an active-site residue. 99-109 (PVAAGLAGGST) contacts ATP. Asp-141 is a catalytic residue.

The protein belongs to the GHMP kinase family. IspE subfamily.

The enzyme catalyses 4-CDP-2-C-methyl-D-erythritol + ATP = 4-CDP-2-C-methyl-D-erythritol 2-phosphate + ADP + H(+). Its pathway is isoprenoid biosynthesis; isopentenyl diphosphate biosynthesis via DXP pathway; isopentenyl diphosphate from 1-deoxy-D-xylulose 5-phosphate: step 3/6. Functionally, catalyzes the phosphorylation of the position 2 hydroxy group of 4-diphosphocytidyl-2C-methyl-D-erythritol. This Microcystis aeruginosa (strain NIES-843 / IAM M-2473) protein is 4-diphosphocytidyl-2-C-methyl-D-erythritol kinase.